A 498-amino-acid chain; its full sequence is Glycerol kinase (498 aa).

T12 contacts ADP. 3 residues coordinate ATP: T12, T13, and S14. Residue T12 participates in sn-glycerol 3-phosphate binding. R16 provides a ligand contact to ADP. R82, E83, Y134, and D243 together coordinate sn-glycerol 3-phosphate. Glycerol-binding residues include R82, E83, Y134, D243, and Q244. 2 residues coordinate ADP: T265 and G308. 4 residues coordinate ATP: T265, G308, Q312, and G412. Residue G412 participates in ADP binding.

This sequence belongs to the FGGY kinase family.

The catalysed reaction is glycerol + ATP = sn-glycerol 3-phosphate + ADP + H(+). The protein operates within polyol metabolism; glycerol degradation via glycerol kinase pathway; sn-glycerol 3-phosphate from glycerol: step 1/1. With respect to regulation, inhibited by fructose 1,6-bisphosphate (FBP). Functionally, key enzyme in the regulation of glycerol uptake and metabolism. Catalyzes the phosphorylation of glycerol to yield sn-glycerol 3-phosphate. This chain is Glycerol kinase, found in Rhizobium rhizogenes (strain K84 / ATCC BAA-868) (Agrobacterium radiobacter).